Here is a 766-residue protein sequence, read N- to C-terminus: Signal transducer and activator of transcription 3.2 (766 aa).

Residues 150-162 carry the Essential for nuclear import motif; it reads DVRKKVQDLEQKM. Residues 580–670 enclose the SH2 domain; that stretch reads WNEGYIIGFI…DATNILVSPL (91 aa). Position 725 is a phosphoserine; by NLK (Ser-725).

It belongs to the transcription factor STAT family. As to quaternary structure, forms a homodimer or a heterodimer with a related family member. Interacts with nlk.2. Phosphorylation of both tyrosine and serine residues, together with dimerization, is required for mesoderm induction.

The protein resides in the cytoplasm. Its subcellular location is the nucleus. Functionally, transcription factor that binds to target promoter sequences and activates transcription upon il6st/gp130 stimulation. Mediates ventralization of embryos, at least in part via inhibition of smad2 signaling. Required for hairy2 to induce dll1/delta1 and promote neural crest cell proliferation and differentiation. Involved in TGFbeta-mediated mesoderm induction in early embryos, acting downstream of map3k7/tak1 and nlk.2. The polypeptide is Signal transducer and activator of transcription 3.2 (stat3.2) (Xenopus laevis (African clawed frog)).